A 283-amino-acid polypeptide reads, in one-letter code: Pantothenate synthetase (283 aa).

30 to 37 (MGYLHEGH) is a binding site for ATP. The Proton donor role is filled by His37. Gln61 provides a ligand contact to (R)-pantoate. Gln61 provides a ligand contact to beta-alanine. 147-150 (GQKD) contributes to the ATP binding site. Position 153 (Gln153) interacts with (R)-pantoate. ATP is bound by residues Val176 and 184-187 (LSSR).

Belongs to the pantothenate synthetase family. Homodimer.

It is found in the cytoplasm. The enzyme catalyses (R)-pantoate + beta-alanine + ATP = (R)-pantothenate + AMP + diphosphate + H(+). The protein operates within cofactor biosynthesis; (R)-pantothenate biosynthesis; (R)-pantothenate from (R)-pantoate and beta-alanine: step 1/1. Functionally, catalyzes the condensation of pantoate with beta-alanine in an ATP-dependent reaction via a pantoyl-adenylate intermediate. This Moorella thermoacetica (strain ATCC 39073 / JCM 9320) protein is Pantothenate synthetase.